Consider the following 152-residue polypeptide: Proteolipid protein 2 (152 aa).

Asn-18 is a glycosylation site (N-linked (GlcNAc...) asparagine). One can recognise an MARVEL domain in the interval 19 to 137; it reads FSRTRKGILL…DAYVTFPVRQ (119 aa). Helical transmembrane passes span 25 to 45, 48 to 68, and 85 to 105; these read GILLFAEIILCLVILICFSAS, GYSSLSVIEMILAAIFFVVYM, and FFRTLIAAILYLITSIVVLVE. N-linked (GlcNAc...) asparagine glycosylation is present at Asn-108. The chain crosses the membrane as a helical span at residues 112–132; it reads IVAGVLGLIATCLFGYDAYVT.

Enriched in colonic mucosa. The expression of A4 follows a gradient along the crypto-villus axis with the most abundant message occurring in the lower half of the crypt.

It is found in the membrane. Its function is as follows. May play a role in cell differentiation in the intestinal epithelium. The chain is Proteolipid protein 2 (PLP2) from Homo sapiens (Human).